A 393-amino-acid polypeptide reads, in one-letter code: Pyrin and HIN domain-containing protein 1-like (393 aa).

The Pyrin domain maps to 1 to 87; that stretch reads MVNEYKRIVL…ANKLKNEKAK (87 aa). The segment at 82-188 is disordered; it reads KNEKAKAKRK…TPTRSSSRIL (107 aa). Basic residues predominate over residues 87 to 102; that stretch reads KAKRKGKGKRKTAAKR. 2 stretches are compositionally biased toward polar residues: residues 108-118 and 126-151; these read PSTSQPMSTTN and GRST…AIQI. The span at 152-169 shows a compositional bias: low complexity; sequence SPTIASSSGQTSSRSSET. A compositionally biased stretch (polar residues) spans 170–186; sequence LQSIIQSPETPTRSSSR. Residues 219-393 form the HIN-200 domain; it reads NVPKEPSEEN…NPGDKLRLML (175 aa).

Belongs to the HIN-200 family.

Its subcellular location is the nucleus. The protein is Pyrin and HIN domain-containing protein 1-like of Mus musculus (Mouse).